The sequence spans 110 residues: Auxin-responsive protein SAUR71 (110 aa).

Belongs to the ARG7 family. In terms of tissue distribution, highly expressed in the steles of roots and hypocotyls.

It is found in the cytoplasm. In terms of biological role, plays a role in the regulation of cell expansion, root meristem patterning and auxin transport. The protein is Auxin-responsive protein SAUR71 of Arabidopsis thaliana (Mouse-ear cress).